The following is a 314-amino-acid chain: Short chain dehydrogenase atnD (314 aa).

Positions 41, 66, 90, and 116 each coordinate NADP(+). Residues Ser-171 and Tyr-204 each act as proton donor in the active site. Tyr-204 and Lys-208 together coordinate NADP(+). Residue Lys-208 is the Lowers pKa of active site Tyr of the active site.

It belongs to the short-chain dehydrogenases/reductases (SDR) family.

It functions in the pathway secondary metabolite biosynthesis. Functionally, short chain dehydrogenase; part of the gene cluster that mediates the biosynthesis of aspercryptins, linear lipopeptides built from six amino acids including 2 highly unusual and nonproteogenic amino acids, 2-amino-octanoic acid (2aoa) and 2-amino-dodecanol (2adol). The core structure of aspercryptins is as follows: Ser/Ala-Thr-Ile/Val-2aoa-Asn-2adol. The first step of aspercryptin biosynthesis is the generation of the fatty acid precursors, octanoic and dodecanoic acids, by the FAS subunits atnF and atnM. The fatty acid precursors are likely transformed into the corresponding alpha-amino fatty acids in three steps. First, they are hydroxylated by the cytochrome P450 monooxygenase atnE, then oxidized to the corresponding alpha-keto acids by the NAD(P)-dependent oxidoreductase atnD, and finally converted to the alpha-amino fatty acids by the PLP-dependent aminotransferases atnH or atnJ. the alpha-amino fatty acids, 2-amino-octanoic and 2-amino-dodecanoic acids, are recognized, activated, and covalently tethered to the NRPS atnA by its fourth and sixth adenylation domains. The second module of atnA is the Thr module and contains an epimerase (E) domain responsible for the epimerization of Thr to D-allo-Thr. Additionally, despite atnA having only one epimerase domain, the first amino acid of aspercryptin A1 is D-Ser, suggesting that serine is either loaded directly as D-Ser on the first module or that the epimerase domain in the threonine module epimerizes both L-Ser and L-Thr. After condensation of the hexapeptide of aspercryptin, the C-terminal reductase (TE) domain might be involved in the reductive release and production of the aldehyde hexapeptide. Further reduction would generate aspercryptins. The variety of aspercryptins produced reflects the flexibility of the atnA NRPS, allowing incorporation of alanine instead of serine, valine for isoleucine, and a C10 fatty amino alcohol instead of the C12 version. AtnB seems to be involved in the selectivity for Ile versus Val by the third module. Moreover, type B, C and D aspercryptins have an additional N-terminal cichorine, acetyl and propionyl group respectively. The polypeptide is Short chain dehydrogenase atnD (Emericella nidulans (strain FGSC A4 / ATCC 38163 / CBS 112.46 / NRRL 194 / M139) (Aspergillus nidulans)).